The following is a 172-amino-acid chain: RNA silencing suppressor p19 (172 aa).

Residues 1-20 are compositionally biased toward basic and acidic residues; the sequence is MERAIQGNDAREQANSERWD. Residues 1 to 38 form a disordered region; that stretch reads MERAIQGNDAREQANSERWDGGSGSSTSPFQLPDESPS.

This sequence belongs to the tombusvirus protein p19 family. Homodimer.

In terms of biological role, viral suppressor of RNA silencing which binds specifically to silencing RNAs (siRNAs). Acts as a molecular caliper to specifically select siRNAs based on the length of the duplex region of the RNA. This chain is RNA silencing suppressor p19, found in Tomato bushy stunt virus (strain type) (TBSV).